We begin with the raw amino-acid sequence, 546 residues long: Chaperonin GroEL (546 aa).

ATP is bound by residues 29–32 (TMGP), Lys-50, 86–90 (DGTTT), Gly-414, and Asp-492.

This sequence belongs to the chaperonin (HSP60) family. Forms a cylinder of 14 subunits composed of two heptameric rings stacked back-to-back. Interacts with the co-chaperonin GroES.

Its subcellular location is the cytoplasm. The enzyme catalyses ATP + H2O + a folded polypeptide = ADP + phosphate + an unfolded polypeptide.. Its function is as follows. Together with its co-chaperonin GroES, plays an essential role in assisting protein folding. The GroEL-GroES system forms a nano-cage that allows encapsulation of the non-native substrate proteins and provides a physical environment optimized to promote and accelerate protein folding. The polypeptide is Chaperonin GroEL (Helicobacter pylori (strain HPAG1)).